Here is a 313-residue protein sequence, read N- to C-terminus: Putative serine protease 29 (313 aa).

Pro residues predominate over residues 1–22; the sequence is MPTTPDPGSEPPARTPRPPPLT. The segment at 1 to 27 is disordered; it reads MPTTPDPGSEPPARTPRPPPLTPGLSP. In terms of domain architecture, Peptidase S1 spans 68 to 310; sequence IVGGHNAPPG…YVPWILQQVG (243 aa). Cys99 and Cys115 are oxidised to a cystine. Catalysis depends on His114, which acts as the Charge relay system. Asn143 is a glycosylation site (N-linked (GlcNAc...) asparagine). Asp161 functions as the Charge relay system in the catalytic mechanism. 3 cysteine pairs are disulfide-bonded: Cys193–Cys268, Cys226–Cys249, and Cys258–Cys286. Catalysis depends on Ser262, which acts as the Charge relay system.

This sequence belongs to the peptidase S1 family.

The protein localises to the secreted. The polypeptide is Putative serine protease 29 (PRSS29P) (Homo sapiens (Human)).